The primary structure comprises 434 residues: Chaperone SurA (434 aa).

An N-terminal signal peptide occupies residues 1-20 (MKNWRTLILGLVICANTAFA). 2 consecutive PpiC domains span residues 171–272 (DTEL…KVND) and 282–382 (VTEV…QLVD).

It localises to the periplasm. It carries out the reaction [protein]-peptidylproline (omega=180) = [protein]-peptidylproline (omega=0). Its function is as follows. Chaperone involved in the correct folding and assembly of outer membrane proteins. Recognizes specific patterns of aromatic residues and the orientation of their side chains, which are found more frequently in integral outer membrane proteins. May act in both early periplasmic and late outer membrane-associated steps of protein maturation. This is Chaperone SurA from Yersinia pestis bv. Antiqua (strain Antiqua).